Consider the following 64-residue polypeptide: Large ribosomal subunit protein bL35 (64 aa).

Residues 1-28 show a composition bias toward basic residues; the sequence is MSKAKTHSGAAKRFKKTASGYKHKHAFK. A disordered region spans residues 1–51; sequence MSKAKTHSGAAKRFKKTASGYKHKHAFKSHILTKMTTKRKRQLRGTSLLNA.

The protein belongs to the bacterial ribosomal protein bL35 family.

This chain is Large ribosomal subunit protein bL35, found in Saccharophagus degradans (strain 2-40 / ATCC 43961 / DSM 17024).